Reading from the N-terminus, the 230-residue chain is U2 small nuclear ribonucleoprotein A' (230 aa).

LRR repeat units follow at residues 19–40 (KDRE…PFFP), 41–62 (RLRM…LANS), and 65–86 (GLTT…DPLR). The LRRCT domain occupies 99–137 (NPVTRKEYYRLWIIWRIPSVRFLDYQKVKDAERAKAAEL). The disordered stretch occupies residues 211–230 (GRIPGGALDGAGNDGDQMQL). Over residues 213 to 223 (IPGGALDGAGN) the composition is skewed to gly residues.

The protein belongs to the U2 small nuclear ribonucleoprotein A family. Associated with the spliceosome.

It is found in the nucleus. Its function is as follows. Involved in pre-mRNA splicing. This Emericella nidulans (strain FGSC A4 / ATCC 38163 / CBS 112.46 / NRRL 194 / M139) (Aspergillus nidulans) protein is U2 small nuclear ribonucleoprotein A' (lea1).